The sequence spans 806 residues: Plasminogen (806 aa).

A signal peptide spans 1–19 (MEYGKVIFLFLLFLKSGQG). A PAN domain is found at 20 to 98 (ESLENYIKTE…RDVVLFEKRI (79 aa)). Intrachain disulfides connect cysteine 49/cysteine 73, cysteine 53/cysteine 61, cysteine 103/cysteine 181, cysteine 124/cysteine 164, cysteine 152/cysteine 176, cysteine 185/cysteine 262, cysteine 188/cysteine 316, cysteine 206/cysteine 245, cysteine 234/cysteine 257, cysteine 275/cysteine 352, cysteine 296/cysteine 335, cysteine 324/cysteine 347, cysteine 371/cysteine 448, cysteine 392/cysteine 431, cysteine 420/cysteine 443, cysteine 476/cysteine 555, cysteine 497/cysteine 538, cysteine 526/cysteine 550, cysteine 563/cysteine 681, cysteine 573/cysteine 581, and cysteine 603/cysteine 619. Kringle domains are found at residues 102–181 (DCKS…VPEC), 184–262 (ECMH…IPRC), 274–352 (QCLK…IPSC), 370–448 (ECYE…LEKC), and 475–555 (DCMY…IPQC). The Peptidase S1 domain maps to 577 to 804 (IVGGCYAQPH…YISWIEDVMK (228 aa)). Serine 593 bears the Phosphoserine mark. Active-site charge relay system residues include histidine 618 and aspartate 661. Serine 684 carries the post-translational modification Phosphoserine. 3 cysteine pairs are disulfide-bonded: cysteine 695–cysteine 762, cysteine 725–cysteine 741, and cysteine 752–cysteine 780. Residue serine 756 is the Charge relay system of the active site.

It belongs to the peptidase S1 family. Plasminogen subfamily. Interacts with CSPG4 and AMOT. Interacts (via the Kringle domains) with HRG; the interaction tethers PLG to the cell surface and enhances its activation. Interacts (via Kringle 4 domain) with ADA; the interaction stimulates PLG activation when in complex with DPP4. Angiostatin: Interacts with ATP5F1A; the interaction inhibits most of the angiogenic effects of angiostatin. Post-translationally, in the presence of the inhibitor, the activation involves only cleavage after Arg-576, yielding two chains held together by two disulfide bonds. In the absence of the inhibitor, the activation involves additionally the removal of the activation peptide.

The protein localises to the secreted. It catalyses the reaction Preferential cleavage: Lys-|-Xaa &gt; Arg-|-Xaa, higher selectivity than trypsin. Converts fibrin into soluble products.. Converted into plasmin by plasminogen activators, both plasminogen and its activator being bound to fibrin. Activated with catalytic amounts of streptokinase. Functionally, plasmin dissolves the fibrin of blood clots and acts as a proteolytic factor in a variety of other processes including embryonic development, tissue remodeling, tumor invasion, and inflammation. In ovulation, weakens the walls of the Graafian follicle. It activates the urokinase-type plasminogen activator, collagenases and several complement zymogens, such as C1, C4 and C5. Cleavage of fibronectin and laminin leads to cell detachment and apoptosis. Also cleaves fibrin, thrombospondin and von Willebrand factor. Its role in tissue remodeling and tumor invasion may be modulated by CSPG4. Binds to cells. The sequence is that of Plasminogen (PLG) from Notamacropus eugenii (Tammar wallaby).